Here is a 569-residue protein sequence, read N- to C-terminus: Mitochondrial import receptor subunit tomm-70 (569 aa).

Residues 1–12 (MVETTGISDQTK) are Mitochondrial intermembrane-facing. The chain crosses the membrane as a helical span at residues 13-32 (KVLIGVAAAATVAGVGYLVY). Residues 33–569 (KSFGGSDLER…KRAAEMLDMY (537 aa)) are Cytoplasmic-facing. 4 TPR repeats span residues 44 to 77 (LEEIKALGNLKFKEKQYDSALEAFTKGVEKAGPN), 119 to 152 (TKAYLRAAKALNDVGKKQDALAYLLAAFTLDSSL), 221 to 254 (DQKQYQLALEKFKKGKYEELIDLLTEENSYPPAM), and 510 to 544 (LHLLGTNGPEPMIKKENYERAMESIRNAALFAPPR).

It belongs to the Tom70 family. Forms part of the preprotein translocase complex of the outer mitochondrial membrane (TOM complex). As to expression, expressed in body wall muscle cells, the pharynx and structures in the tail.

It is found in the mitochondrion outer membrane. Its function is as follows. Receptor that accelerates the import of all mitochondrial precursor proteins. This chain is Mitochondrial import receptor subunit tomm-70, found in Caenorhabditis elegans.